A 297-amino-acid polypeptide reads, in one-letter code: 4-hydroxy-tetrahydrodipicolinate synthase (297 aa).

Threonine 51 contacts pyruvate. Tyrosine 139 (proton donor/acceptor) is an active-site residue. Lysine 167 functions as the Schiff-base intermediate with substrate in the catalytic mechanism. Position 209 (valine 209) interacts with pyruvate.

This sequence belongs to the DapA family. As to quaternary structure, homotetramer; dimer of dimers.

The protein localises to the cytoplasm. It carries out the reaction L-aspartate 4-semialdehyde + pyruvate = (2S,4S)-4-hydroxy-2,3,4,5-tetrahydrodipicolinate + H2O + H(+). It functions in the pathway amino-acid biosynthesis; L-lysine biosynthesis via DAP pathway; (S)-tetrahydrodipicolinate from L-aspartate: step 3/4. Catalyzes the condensation of (S)-aspartate-beta-semialdehyde [(S)-ASA] and pyruvate to 4-hydroxy-tetrahydrodipicolinate (HTPA). The chain is 4-hydroxy-tetrahydrodipicolinate synthase from Albidiferax ferrireducens (strain ATCC BAA-621 / DSM 15236 / T118) (Rhodoferax ferrireducens).